The chain runs to 320 residues: MKDLYSRRINYMRISITDLCNLRCQYCMPAEGICKKDHKEVLTLEEITDIVKAGVGLGIDKVRITGGEPLVRNGIVEFIQMISNIDGIKDIAITTNGILLPRYAEALKEAGLKRVNISIDSLNPDKYREITRGGDLSKVLEGINECIRLGLTPVKLNVVAIGGYNDDEIEDFIQLTMDKPIDVRFIELMPIGEASQWGKDRFISNEEIVHRFKNLVPMETEKSSPAKYYQLPGGMGRVGLINPISSHFCGDCNRVRLTSDGKLKPCLHSNHEIDILDAVRNHPEKIQEVLASAILSKPEKHDLLTDSHEESNRGMSQIGG.

The Radical SAM core domain occupies Leu-4–Lys-227. Arg-13 provides a ligand contact to GTP. The [4Fe-4S] cluster site is built by Cys-20 and Cys-24. Tyr-26 lines the S-adenosyl-L-methionine pocket. Cys-27 serves as a coordination point for [4Fe-4S] cluster. Arg-63 is a GTP binding site. Gly-67 is a binding site for S-adenosyl-L-methionine. Thr-94 contacts GTP. Residue Ser-118 coordinates S-adenosyl-L-methionine. Lys-155 is a binding site for GTP. S-adenosyl-L-methionine is bound at residue Met-189. 2 residues coordinate [4Fe-4S] cluster: Cys-249 and Cys-252. A GTP-binding site is contributed by Arg-254–Arg-256. Cys-266 is a [4Fe-4S] cluster binding site. The span at Lys-300 to Asn-312 shows a compositional bias: basic and acidic residues. A disordered region spans residues Lys-300–Gly-320.

It belongs to the radical SAM superfamily. MoaA family. Monomer and homodimer. Requires [4Fe-4S] cluster as cofactor.

The catalysed reaction is GTP + AH2 + S-adenosyl-L-methionine = (8S)-3',8-cyclo-7,8-dihydroguanosine 5'-triphosphate + 5'-deoxyadenosine + L-methionine + A + H(+). Its pathway is cofactor biosynthesis; molybdopterin biosynthesis. Catalyzes the cyclization of GTP to (8S)-3',8-cyclo-7,8-dihydroguanosine 5'-triphosphate. The sequence is that of GTP 3',8-cyclase from Alkaliphilus oremlandii (strain OhILAs) (Clostridium oremlandii (strain OhILAs)).